The chain runs to 666 residues: Endogenous retrovirus group K member 9 Gag polyprotein (666 aa).

Glycine 2 carries N-myristoyl glycine lipidation. The segment at 165-264 (GKGPELVGPS…APPSRQGSEL (100 aa)) is disordered. Over residues 232–247 (GMPPAPQGRAPYPQPP) the composition is skewed to pro residues. 2 consecutive CCHC-type zinc fingers follow at residues 544–561 (GKCY…NCPV) and 580–597 (DLCP…QCRS). Residues 598–641 (KFDKNGQPLSGNEQRGQPQAPQQTGAFPIQPFVPQGFQGQQPPL) form a disordered region. Positions 604-622 (QPLSGNEQRGQPQAPQQTG) are enriched in polar residues. Over residues 624 to 640 (FPIQPFVPQGFQGQQPP) the composition is skewed to low complexity.

The protein belongs to the beta type-B retroviral Gag protein family. HERV class-II K(HML-2) gag subfamily. In terms of processing, myristoylation is essential for retroviral assembly. Alteration of the glycine residue leads to a block in the budding of particles and an accumulation of Gag inside the cell. Specific enzymatic cleavages may yield mature proteins.

The protein resides in the cell membrane. Functionally, the products of the Gag polyproteins of infectious retroviruses perform highly complex orchestrated tasks during the assembly, budding, maturation, and infection stages of the viral replication cycle. During viral assembly, the proteins form membrane associations and self-associations that ultimately result in budding of an immature virion from the infected cell. Gag precursors also function during viral assembly to selectively bind and package two plus strands of genomic RNA. Endogenous Gag proteins may have kept, lost or modified their original function during evolution. The polypeptide is Endogenous retrovirus group K member 9 Gag polyprotein (ERVK-9) (Homo sapiens (Human)).